Here is a 203-residue protein sequence, read N- to C-terminus: Peptidyl-tRNA hydrolase (203 aa).

Position 14 (tyrosine 14) interacts with tRNA. Histidine 19 functions as the Proton acceptor in the catalytic mechanism. Residues tyrosine 64, asparagine 66, and asparagine 112 each coordinate tRNA.

It belongs to the PTH family. In terms of assembly, monomer.

The protein resides in the cytoplasm. It carries out the reaction an N-acyl-L-alpha-aminoacyl-tRNA + H2O = an N-acyl-L-amino acid + a tRNA + H(+). In terms of biological role, hydrolyzes ribosome-free peptidyl-tRNAs (with 1 or more amino acids incorporated), which drop off the ribosome during protein synthesis, or as a result of ribosome stalling. Its function is as follows. Catalyzes the release of premature peptidyl moieties from peptidyl-tRNA molecules trapped in stalled 50S ribosomal subunits, and thus maintains levels of free tRNAs and 50S ribosomes. The polypeptide is Peptidyl-tRNA hydrolase (Methylobacterium sp. (strain 4-46)).